The sequence spans 498 residues: ATP synthase subunit beta, chloroplastic (498 aa).

ATP is bound at residue 172 to 179; it reads GGAGVGKT.

This sequence belongs to the ATPase alpha/beta chains family. In terms of assembly, F-type ATPases have 2 components, CF(1) - the catalytic core - and CF(0) - the membrane proton channel. CF(1) has five subunits: alpha(3), beta(3), gamma(1), delta(1), epsilon(1). CF(0) has four main subunits: a(1), b(1), b'(1) and c(9-12).

The protein localises to the plastid. The protein resides in the chloroplast thylakoid membrane. It carries out the reaction ATP + H2O + 4 H(+)(in) = ADP + phosphate + 5 H(+)(out). Its function is as follows. Produces ATP from ADP in the presence of a proton gradient across the membrane. The catalytic sites are hosted primarily by the beta subunits. This chain is ATP synthase subunit beta, chloroplastic, found in Aspidistra elatior (Cast-iron plant).